The primary structure comprises 559 residues: Chaperonin GroEL 3 (559 aa).

Residues 88–92 (DGTTT), glycine 426, and aspartate 507 contribute to the ATP site.

The protein belongs to the chaperonin (HSP60) family. In terms of assembly, forms a cylinder of 14 subunits composed of two heptameric rings stacked back-to-back. Interacts with the co-chaperonin GroES.

Its subcellular location is the cytoplasm. It catalyses the reaction ATP + H2O + a folded polypeptide = ADP + phosphate + an unfolded polypeptide.. Its function is as follows. Together with its co-chaperonin GroES, plays an essential role in assisting protein folding. The GroEL-GroES system forms a nano-cage that allows encapsulation of the non-native substrate proteins and provides a physical environment optimized to promote and accelerate protein folding. The sequence is that of Chaperonin GroEL 3 from Methylococcus capsulatus (strain ATCC 33009 / NCIMB 11132 / Bath).